Reading from the N-terminus, the 222-residue chain is 7-cyano-7-deazaguanine synthase (222 aa).

14-24 (FSGGQDSTTCL) lines the ATP pocket. Residues C190, C199, C202, and C205 each contribute to the Zn(2+) site.

The protein belongs to the QueC family. In terms of assembly, homodimer. Requires Zn(2+) as cofactor.

It carries out the reaction 7-carboxy-7-deazaguanine + NH4(+) + ATP = 7-cyano-7-deazaguanine + ADP + phosphate + H2O + H(+). It functions in the pathway purine metabolism; 7-cyano-7-deazaguanine biosynthesis. Catalyzes the ATP-dependent conversion of 7-carboxy-7-deazaguanine (CDG) to 7-cyano-7-deazaguanine (preQ(0)). This is 7-cyano-7-deazaguanine synthase from Staphylococcus aureus (strain Mu3 / ATCC 700698).